The primary structure comprises 396 residues: Elongation factor Tu (396 aa).

The 196-residue stretch at 10–205 (KTHANIGTIG…AVDEYIPTPE (196 aa)) folds into the tr-type G domain. The segment at 19-26 (GHVDHGKT) is G1. 19–26 (GHVDHGKT) contributes to the GTP binding site. Threonine 26 serves as a coordination point for Mg(2+). Positions 61 to 65 (GITIS) are G2. Positions 82–85 (DCPG) are G3. GTP is bound by residues 82–86 (DCPGH) and 137–140 (NKCD). Residues 137–140 (NKCD) are G4. Residues 175 to 177 (SAL) form a G5 region.

This sequence belongs to the TRAFAC class translation factor GTPase superfamily. Classic translation factor GTPase family. EF-Tu/EF-1A subfamily. Monomer.

It localises to the cytoplasm. The enzyme catalyses GTP + H2O = GDP + phosphate + H(+). Functionally, GTP hydrolase that promotes the GTP-dependent binding of aminoacyl-tRNA to the A-site of ribosomes during protein biosynthesis. This is Elongation factor Tu from Shouchella clausii (strain KSM-K16) (Alkalihalobacillus clausii).